The chain runs to 102 residues: Small ribosomal subunit protein bS20 (102 aa).

It belongs to the bacterial ribosomal protein bS20 family.

Functionally, binds directly to 16S ribosomal RNA. In Synechococcus sp. (strain WH7803), this protein is Small ribosomal subunit protein bS20.